Here is a 47-residue protein sequence, read N- to C-terminus: PhoP/PhoQ regulator MgrB (47 aa).

The chain crosses the membrane as a helical span at residues 6 to 26 (WVILIIVALVCLLLWAQVFNI).

It belongs to the MgrB family. As to quaternary structure, may form homooligomers. Probably interacts with the periplasmic domain of PhoQ.

The protein resides in the cell inner membrane. In terms of biological role, phoP-regulated transcription is redox-sensitive, being activated when the periplasm becomes more reducing. MgrB acts between DsbA/DsbB and PhoP/PhoQ in this pathway. Represses PhoP/PhoQ signaling, possibly by binding to the periplasmic domain of PhoQ, altering its activity and that of downstream effector PhoP. The protein is PhoP/PhoQ regulator MgrB of Citrobacter koseri (strain ATCC BAA-895 / CDC 4225-83 / SGSC4696).